The primary structure comprises 441 residues: Peroxisome proliferator-activated receptor delta (441 aa).

Residues 1-22 are compositionally biased toward acidic residues; it reads MEQPQEEAPEVREEEEKEEVAE. Residues 1–54 are disordered; sequence MEQPQEEAPEVREEEEKEEVAEAEGAPELNGGPQHALPSSSYTDLSRSSSPPSL. Low complexity predominate over residues 37–54; that stretch reads LPSSSYTDLSRSSSPPSL. Residues 71–145 constitute a DNA-binding region (nuclear receptor); it reads NMECRVCGDK…LGMSHNAIRF (75 aa). 2 NR C4-type zinc fingers span residues 74-94 and 111-133; these read CRVCGDKASGFHYGVHACEGC and CERSCKIQKKNRNKCQYCRFQKC. One can recognise an NR LBD domain in the interval 211–439; the sequence is FVIHDIETLW…HPLLQEIYKD (229 aa).

It belongs to the nuclear hormone receptor family. NR1 subfamily. Heterodimer with the retinoid X receptor. Interacts (via domain NR LBD) with CRY1 and CRY2 in a ligand-dependent manner. In terms of processing, 'Lys-48'-linked polyubiquitinated; leading to proteasomal degradation. Deubiquitinated and stabilized by OTUD3. As to expression, ubiquitous with maximal levels in placenta and skeletal muscle.

The protein resides in the nucleus. Functionally, ligand-activated transcription factor key mediator of energy metabolism in adipose tissues. Receptor that binds peroxisome proliferators such as hypolipidemic drugs and fatty acids. Has a preference for poly-unsaturated fatty acids, such as gamma-linoleic acid and eicosapentanoic acid. Once activated by a ligand, the receptor binds to promoter elements of target genes. Regulates the peroxisomal beta-oxidation pathway of fatty acids. Functions as transcription activator for the acyl-CoA oxidase gene. Decreases expression of NPC1L1 once activated by a ligand. The protein is Peroxisome proliferator-activated receptor delta of Homo sapiens (Human).